The primary structure comprises 318 residues: Serine protease 41 (318 aa).

Residues 1–19 (MGARGALLLALLLARAGLG) form the signal peptide. Positions 20-54 (KPGELGALQAGPGAARRPGGGGREEACGHREIHAL) are excised as a propeptide. A Peptidase S1 domain is found at 55 to 297 (VAGGVESARG…YFHWIRRVMS (243 aa)). Cys80 and Cys96 are joined by a disulfide. Residues His95 and Asp147 each act as charge relay system in the active site. Cystine bridges form between Cys181–Cys255, Cys215–Cys234, and Cys245–Cys273. Asn211 carries an N-linked (GlcNAc...) asparagine glycan. Ser249 acts as the Charge relay system in catalysis. Asn284 carries an N-linked (GlcNAc...) asparagine glycan. Ser299 is lipidated: GPI-anchor amidated serine. Residues 300–318 (TPRPNPSQLLLLLALLWAP) constitute a propeptide, removed in mature form.

This sequence belongs to the peptidase S1 family. Post-translationally, N-glycosylated.

It localises to the cell membrane. The polypeptide is Serine protease 41 (Homo sapiens (Human)).